The primary structure comprises 515 residues: Glucose-6-phosphate 1-dehydrogenase X (515 aa).

Position 2 is an N-acetylalanine (alanine 2). NADP(+) is bound by residues 38–45 (GASGDLAK), arginine 72, tyrosine 147, and lysine 171. D-glucose 6-phosphate contacts are provided by residues lysine 171, 201–205 (HYLGK), glutamate 239, and aspartate 258. The Proton acceptor role is filled by histidine 263. Arginine 357 contacts NADP(+). Residues lysine 360 and arginine 365 each contribute to the D-glucose 6-phosphate site. 3 residues coordinate NADP(+): lysine 366, arginine 370, and arginine 393. Residue glutamine 395 participates in D-glucose 6-phosphate binding. Residues 401 to 403 (YTK), 421 to 423 (DLT), arginine 487, and tyrosine 503 each bind NADP(+). Tyrosine 507 carries the phosphotyrosine modification. Tryptophan 509 serves as a coordination point for NADP(+).

Belongs to the glucose-6-phosphate dehydrogenase family. In terms of assembly, homotetramer; dimer of dimers. Interacts with SIRT2; the interaction is enhanced by H(2)O(2) treatment. Forms a ternary complex with ALDOB and TP53; this interaction is direct. ALDOB stabilizes the complex inhibiting G6PD activity and keeping oxidative pentose phosphate metabolism in check. Acetylated by ELP3 at Lys-403; acetylation inhibits its homodimerization and enzyme activity. Deacetylated by SIRT2 at Lys-403; deacetylation stimulates its enzyme activity.

The protein localises to the cytoplasm. It localises to the cytosol. Its subcellular location is the membrane. It carries out the reaction D-glucose 6-phosphate + NADP(+) = 6-phospho-D-glucono-1,5-lactone + NADPH + H(+). Its pathway is carbohydrate degradation; pentose phosphate pathway; D-ribulose 5-phosphate from D-glucose 6-phosphate (oxidative stage): step 1/3. Functionally, catalyzes the rate-limiting step of the oxidative pentose-phosphate pathway, which represents a route for the dissimilation of carbohydrates besides glycolysis. The main function of this enzyme is to provide reducing power (NADPH) and pentose phosphates for fatty acid and nucleic acid synthesis. In Mus musculus (Mouse), this protein is Glucose-6-phosphate 1-dehydrogenase X (G6pdx).